The sequence spans 872 residues: Valine--tRNA ligase (872 aa).

The short motif at 46–56 (PNVTGKLHIGH) is the 'HIGH' region element. A 'KMSKS' region motif is present at residues 523–527 (KMSKS). K526 contacts ATP. Residues 796 to 872 (IEIANDSFIN…KDKLKELTND (77 aa)) are a coiled coil.

This sequence belongs to the class-I aminoacyl-tRNA synthetase family. ValS type 1 subfamily. As to quaternary structure, monomer.

Its subcellular location is the cytoplasm. The catalysed reaction is tRNA(Val) + L-valine + ATP = L-valyl-tRNA(Val) + AMP + diphosphate. Its function is as follows. Catalyzes the attachment of valine to tRNA(Val). As ValRS can inadvertently accommodate and process structurally similar amino acids such as threonine, to avoid such errors, it has a 'posttransfer' editing activity that hydrolyzes mischarged Thr-tRNA(Val) in a tRNA-dependent manner. The polypeptide is Valine--tRNA ligase (Mycoplasma mycoides subsp. mycoides SC (strain CCUG 32753 / NCTC 10114 / PG1)).